The sequence spans 171 residues: Tubulin polymerization-promoting protein family member 2 (171 aa).

Residues 120 to 171 (LTDTSKYTGTHKERFDESGKGKGIAGREDVTDNSGYVSGYKGAGTYDKKGSN) form a disordered region. Positions 129 to 149 (THKERFDESGKGKGIAGREDV) are enriched in basic and acidic residues.

It belongs to the TPPP family.

Its subcellular location is the cytoplasm. It is found in the cytosol. It localises to the cell projection. The protein resides in the cilium. The protein localises to the flagellum. Probable regulator of microtubule dynamics required for sperm motility. In contrast to other members of the family, has no microtubule bundling activity. In Bos taurus (Bovine), this protein is Tubulin polymerization-promoting protein family member 2.